A 1385-amino-acid chain; its full sequence is Probable serine/threonine-protein kinase DDB_G0268876 (1385 aa).

Positions 758–1008 (LELTKEIGRG…QQIITYLENL (251 aa)) constitute a Protein kinase domain. Residues 764 to 772 (IGRGVSGVV) and lysine 785 each bind ATP. Aspartate 878 serves as the catalytic Proton acceptor. Disordered regions lie at residues 1040–1074 (GGNS…ENKI), 1091–1266 (EVSK…SVGG), and 1287–1339 (ISSS…NNNN). Residues 1055–1073 (VSGSNNNESSTAVSLNENK) are compositionally biased toward polar residues. The segment covering 1107–1144 (SSSTSSSPSTLSAPQSPVGSTSPMGSTSTSPISNNNNR) has biased composition (low complexity). Over residues 1145-1162 (PTHDHQQPHQVKWERIVP) the composition is skewed to basic and acidic residues. 3 stretches are compositionally biased toward low complexity: residues 1189-1232 (NNNN…SSGI), 1242-1266 (FLSS…SVGG), and 1295-1339 (NNNN…NNNN).

Belongs to the protein kinase superfamily. TKL Ser/Thr protein kinase family.

The enzyme catalyses L-seryl-[protein] + ATP = O-phospho-L-seryl-[protein] + ADP + H(+). The catalysed reaction is L-threonyl-[protein] + ATP = O-phospho-L-threonyl-[protein] + ADP + H(+). The protein is Probable serine/threonine-protein kinase DDB_G0268876 of Dictyostelium discoideum (Social amoeba).